A 408-amino-acid polypeptide reads, in one-letter code: Guanine nucleotide-binding protein alpha-14 subunit (408 aa).

Residues 39–46, 79–86, 201–205, 216–222, 241–245, 285–288, 325–328, and Ala380 each bind GTP; these read HSEELEAK, GGPLSGKS, TRIAD, VHSRKAT, DVGGQ, FPKF, and NKVD. One can recognise a G-alpha domain in the interval 71–408; the sequence is SHIKILILGG…KANAKATGLS (338 aa). The interval 74 to 87 is G1 motif; the sequence is KILILGGPLSGKST. Position 86 (Ser86) interacts with Mg(2+). Residues 214–222 are G2 motif; sequence DIVHSRKAT. Thr222 lines the Mg(2+) pocket. The G3 motif stretch occupies residues 237 to 246; that stretch reads LLMIDVGGQR. The G4 motif stretch occupies residues 321 to 328; the sequence is LLFFNKVD. The G5 motif stretch occupies residues 378–383; sequence TTATNT.

Belongs to the G-alpha family. In terms of assembly, g proteins are composed of 3 units; alpha, beta and gamma. The alpha chain contains the guanine nucleotide binding site. Interacts with the dopamine receptor dop-2 (via C-terminus); the interaction is direct.

Functionally, guanine nucleotide-binding proteins (G proteins) are involved as modulators or transducers in various transmembrane signaling systems. In association with the G-protein coupled dopamine receptor dop-2, modulates two types of learning: touch habituation and chemosensory associative conditioning. The protein is Guanine nucleotide-binding protein alpha-14 subunit of Caenorhabditis elegans.